The sequence spans 243 residues: Adenosine 5'-phosphosulfate reductase (243 aa).

This sequence belongs to the PAPS reductase family. CysH subfamily. It depends on [4Fe-4S] cluster as a cofactor.

It localises to the cytoplasm. The enzyme catalyses [thioredoxin]-disulfide + sulfite + AMP + 2 H(+) = adenosine 5'-phosphosulfate + [thioredoxin]-dithiol. Its pathway is sulfur metabolism; hydrogen sulfide biosynthesis; sulfite from sulfate. In terms of biological role, catalyzes the formation of sulfite from adenosine 5'-phosphosulfate (APS) using thioredoxin as an electron donor. This is Adenosine 5'-phosphosulfate reductase from Staphylococcus haemolyticus (strain JCSC1435).